Consider the following 1017-residue polypeptide: Protein HIR2 (1017 aa).

7 WD repeats span residues 10-49 (YHNGGIHSIDVNQDNTILVSGGTDNKIGVWNLKKLIELSK), 74-117 (CHKS…QLFP), 124-163 (SEVNPVVDLTISADNRLIAWSTNNGKVYLYDVVKDTFQEL), 167-208 (CHEK…DDTS), 228-271 (PLNV…TNIE), 275-326 (GHDF…PITV), and 330-371 (AVQG…YTFS). A disordered region spans residues 417–561 (ISTTTSSSNT…APSDLPRSNS (145 aa)). Residues 473-483 (LDDDIDGDGDD) show a composition bias toward acidic residues. 2 stretches are compositionally biased toward polar residues: residues 518 to 535 (SDSTTQSLSFNKQKVTTK) and 545 to 561 (LISSGNSAPSDLPRSNS).

This sequence belongs to the WD repeat HIR1 family.

The protein localises to the nucleus. Its function is as follows. Required for replication-independent chromatin assembly and for the periodic repression of histone gene transcription during the cell cycle. In Candida albicans (strain SC5314 / ATCC MYA-2876) (Yeast), this protein is Protein HIR2 (HIR2).